Consider the following 166-residue polypeptide: NADPH-dependent 7-cyano-7-deazaguanine reductase (166 aa).

The active-site Thioimide intermediate is the Cys-57. Asp-64 acts as the Proton donor in catalysis. Substrate-binding positions include 79-81 (VES) and 98-99 (HE).

The protein belongs to the GTP cyclohydrolase I family. QueF type 1 subfamily.

It is found in the cytoplasm. It catalyses the reaction 7-aminomethyl-7-carbaguanine + 2 NADP(+) = 7-cyano-7-deazaguanine + 2 NADPH + 3 H(+). The protein operates within tRNA modification; tRNA-queuosine biosynthesis. Its function is as follows. Catalyzes the NADPH-dependent reduction of 7-cyano-7-deazaguanine (preQ0) to 7-aminomethyl-7-deazaguanine (preQ1). The chain is NADPH-dependent 7-cyano-7-deazaguanine reductase from Staphylococcus saprophyticus subsp. saprophyticus (strain ATCC 15305 / DSM 20229 / NCIMB 8711 / NCTC 7292 / S-41).